We begin with the raw amino-acid sequence, 533 residues long: Basal body-orientation factor 1 (533 aa).

A disordered region spans residues 1–30; the sequence is MPAKDKRKDKRKDKRKGKNKGKEPKKIIKS. The span at 7-19 shows a compositional bias: basic residues; sequence RKDKRKDKRKGKN. A compositionally biased stretch (basic and acidic residues) spans 20 to 30; that stretch reads KGKEPKKIIKS. Coiled coils occupy residues 34–207 and 246–368; these read AIER…EAEK and LKEA…VEQF. An interaction with MNS1 and ODF2 region spans residues 277–533; it reads VKEKIMQLTQ…PQGLQDSDIA (257 aa). The span at 507–517 shows a compositional bias: polar residues; the sequence is QQAPVSDSNRM. The segment at 507-533 is disordered; sequence QQAPVSDSNRMVSPDVIPQGLQDSDIA.

Belongs to the BBOF1 family. As to quaternary structure, interacts with MNS1 and ODF2. Expressed exclusively in the testis and predominantly expressed in male germ cells.

The protein localises to the cytoplasm. The protein resides in the cytoskeleton. Its subcellular location is the cilium basal body. It is found in the flagellum axoneme. Plays an essential role in sperm motility and male fertility by stabilizing the sperm flagellar axonemal structure. May be required for the stability of ODF2 and MANS1 proteins. Dispensable for the assembly and function of motile cilia. The polypeptide is Basal body-orientation factor 1 (Mus musculus (Mouse)).